The primary structure comprises 388 residues: 3-oxo-tetronate kinase (388 aa).

ATP is bound by residues serine 258 and 360–363 (GGET).

The protein belongs to the four-carbon acid sugar kinase family.

The enzyme catalyses 3-dehydro-L-erythronate + ATP = 3-dehydro-4-O-phospho-L-erythronate + ADP + H(+). The catalysed reaction is 3-dehydro-D-erythronate + ATP = 3-dehydro-4-O-phospho-D-erythronate + ADP + H(+). Functionally, catalyzes the ATP-dependent phosphorylation of 3-oxo-tetronate to 3-oxo-tetronate 4-phosphate. This Escherichia coli (strain K12) protein is 3-oxo-tetronate kinase.